Here is a 562-residue protein sequence, read N- to C-terminus: Potassium-transporting ATPase potassium-binding subunit (562 aa).

10 consecutive transmembrane segments (helical) span residues Ala-5–Ser-25, Ala-63–Ala-83, Gly-132–Ile-152, Leu-175–Leu-195, Leu-250–Phe-270, Gln-279–Met-299, Gly-379–Gly-399, Met-416–Leu-436, Val-483–Ile-503, and Leu-526–Ala-546.

The protein belongs to the KdpA family. As to quaternary structure, the system is composed of three essential subunits: KdpA, KdpB and KdpC.

The protein resides in the cell inner membrane. In terms of biological role, part of the high-affinity ATP-driven potassium transport (or Kdp) system, which catalyzes the hydrolysis of ATP coupled with the electrogenic transport of potassium into the cytoplasm. This subunit binds the periplasmic potassium ions and delivers the ions to the membrane domain of KdpB through an intramembrane tunnel. The protein is Potassium-transporting ATPase potassium-binding subunit of Pectobacterium atrosepticum (strain SCRI 1043 / ATCC BAA-672) (Erwinia carotovora subsp. atroseptica).